Reading from the N-terminus, the 151-residue chain is MIKIKKHRRNPYTTSDEVYALGQHICMSAHKARRIIDQIRGRSYEETLMILELMPYRACYPILKLVYSAAANARHNRGFNEASLIISQVAVNEGTTLKRLNPRARGRSYLIKRPTCHITIALKDLEFEPLDRYMLRPKPKNTGWLGWLKKG.

The protein belongs to the universal ribosomal protein uL22 family. In terms of assembly, part of the 50S ribosomal subunit.

It localises to the plastid. The protein localises to the chloroplast. In terms of biological role, this protein binds specifically to 23S rRNA. The globular domain of the protein is located near the polypeptide exit tunnel on the outside of the subunit, while an extended beta-hairpin is found that lines the wall of the exit tunnel in the center of the 70S ribosome. The sequence is that of Large ribosomal subunit protein uL22c (rpl22) from Gossypium barbadense (Sea Island cotton).